The chain runs to 569 residues: Aspartokinase 1, chloroplastic (569 aa).

The N-terminal 90 residues, 1 to 90 (MAATRVRCCH…VDEKGITCVM (90 aa)), are a transit peptide targeting the chloroplast. ATP contacts are provided by Lys-91, Gly-94, and Ser-123. Residue Glu-207 coordinates substrate. ACT domains follow at residues 405–483 (IAST…AIIS) and 484–560 (LIGN…GNGS). Residues Gln-413 and Gly-415 each contribute to the L-lysine site. Ser-430 is a binding site for S-adenosyl-L-methionine. Residues Val-431, Asp-432, and Ser-437 each coordinate L-lysine. The S-adenosyl-L-methionine site is built by Ser-452 and Arg-453.

This sequence belongs to the aspartokinase family. Homodimer.

The protein resides in the plastid. It is found in the chloroplast. It carries out the reaction L-aspartate + ATP = 4-phospho-L-aspartate + ADP. The protein operates within amino-acid biosynthesis; L-lysine biosynthesis via DAP pathway; (S)-tetrahydrodipicolinate from L-aspartate: step 1/4. It functions in the pathway amino-acid biosynthesis; L-methionine biosynthesis via de novo pathway; L-homoserine from L-aspartate: step 1/3. It participates in amino-acid biosynthesis; L-threonine biosynthesis; L-threonine from L-aspartate: step 1/5. With respect to regulation, inhibited by S-adenosyl-L-methionine (SAM) and lysine in a synergistic manner. No inhibition by threonine, leucine or SAM alone, and no activation or inhibition by alanine, cysteine, isoleucine, serine, valine, methionine, glutamine, asparagine, glutamic acid or arginine. Involved in the first step of essential amino acids lysine, threonine, methionine and isoleucine synthesis via the aspartate-family pathway. This is Aspartokinase 1, chloroplastic (AK1) from Arabidopsis thaliana (Mouse-ear cress).